We begin with the raw amino-acid sequence, 161 residues long: Trivalent organoarsenical cleaving enzyme (161 aa).

Residues 2 to 119 (KYAHVGLNVT…DGNEWEFFYT (118 aa)) form the VOC domain. Residues H5 and H62 each coordinate Fe(2+). C96 and C97 together coordinate roxarsone (III). Residue E115 participates in Fe(2+) binding.

The cofactor is Fe(2+).

It carries out the reaction methylarsonous acid + AH2 + O2 = arsenite + methanol + A + H(+). It catalyses the reaction roxarsone (III) + AH2 + O2 = 4-hydroxy-3-nitrocyclohexa-2,5-dien-1-one + arsenite + A + H(+). The enzyme catalyses nitarsone (III) + AH2 + O2 = 4-nitrocyclohexa-2,5-dien-1-one + arsenite + A + H(+). The catalysed reaction is 4-aminophenylarsonous acid + AH2 + O2 = 4-aminocyclohexa-2,5-dien-1-one + arsenite + A. Its activity is regulated as follows. Inhibited in vitro by reagents that chemically modify histidine residues (diethylpyrocarbonate (DEPC)), aspartate or glutamate residues (1-ethyl-3-(3-(dimethylamino)propyl) carbodiimide (EDC)), or cysteine residues (N-ethylmaleimide (NEM) or iodoacetamide (IAA)). In terms of biological role, nonheme iron-dependent dioxygenase that can break carbon-arsenic bonds, playing a role in the detoxification of environmental organoarsenical compounds. Catalyzes the oxygen-dependent demethylation of highly toxic methylarsonous acid (MAs(III)) to arsenite, which can then be exported out of the cell. Can also cleave the C-As bond in several trivalent aromatic arsenicals, including roxarsone (III), nitarsone (III) and (4-aminophenyl)arsonous acid. Organoarsenical degradation by this enzyme is proposed to have a significant impact on the arsenic biogeocycle that maintains a balance between organic and inorganic species. This is Trivalent organoarsenical cleaving enzyme from Bacillus sp. (strain MD1).